Consider the following 1341-residue polypeptide: Restriction of telomere capping protein 1 (1341 aa).

The segment at 1–39 (MSLSPHVENASIPKGSTPIPKNRNVSSIGKGEFLGSSSS) is disordered. 6 WD repeats span residues 207–248 (NKFS…SIDN), 256–296 (EHTR…SKSS), 305–342 (TASD…YKFA), 367–406 (AHTG…NAAE), 439–486 (NTGY…IPKH), and 489–527 (LSET…TVLE). Disordered stretches follow at residues 559–593 (PELQ…IGGI), 600–619 (TGLT…GPTF), 630–651 (ASSF…ENRE), 736–765 (KNAT…DDDD), and 789–830 (NEKV…DRAR). The segment covering 630–644 (ASSFNSSSASLTSLT) has biased composition (low complexity). Residues 753–765 (DDGDDDDDDDDDD) are compositionally biased toward acidic residues. Over residues 814-823 (SSISSISASR) the composition is skewed to low complexity. The stretch at 843–883 (KIQTLVDLISIATHNASVYLSIDDLTNFKIWILIRDSLLWD) is one WD 7 repeat. 2 disordered regions span residues 941–962 (AFRA…KLKE) and 1013–1043 (DEHE…KSIP). 2 stretches are compositionally biased toward basic and acidic residues: residues 951 to 962 (DAEKKPVSKLKE) and 1015 to 1027 (HEHQ…HDSP). Residues S1036, S1080, S1087, S1089, S1123, and S1133 each carry the phosphoserine modification. 2 WD repeats span residues 1129-1169 (SRPD…KQLY) and 1216-1255 (LFGI…LITN). The RING-type; degenerate zinc finger occupies 1293–1335 (CVLCERPLKKLTMVILPCGHEGHFQCIQEWFLDENEQECPGGC).

The protein belongs to the WD repeat RTC1 family. In terms of assembly, component of the SEA complex composed of at least IML1/SEA1, RTC1/SEA2, MTC5/SEA3, NPR2, NPR3, SEA4, SEC13 and SEH1. Interacts with ribosomes.

Its subcellular location is the vacuole membrane. Functionally, component of the SEA complex which coats the vacuolar membrane and is involved in intracellular trafficking, autophagy, response to nitrogen starvation, and amino acid biogenesis. May be involved in a process influencing telomere capping. This is Restriction of telomere capping protein 1 (RTC1) from Saccharomyces cerevisiae (strain ATCC 204508 / S288c) (Baker's yeast).